Here is a 216-residue protein sequence, read N- to C-terminus: Thymidylate kinase (216 aa).

An ATP-binding site is contributed by 10–17; that stretch reads GIDGCGKT.

It belongs to the thymidylate kinase family.

The catalysed reaction is dTMP + ATP = dTDP + ADP. In terms of biological role, phosphorylation of dTMP to form dTDP in both de novo and salvage pathways of dTTP synthesis. The protein is Thymidylate kinase of Prochlorococcus marinus (strain MIT 9313).